A 79-amino-acid chain; its full sequence is ATP synthase subunit c (79 aa).

2 helical membrane passes run 7–27 (VSGMAALGAGIAALACIGAGI) and 56–76 (IGSAFSEATAIYGLIIALFLI).

Belongs to the ATPase C chain family. As to quaternary structure, F-type ATPases have 2 components, F(1) - the catalytic core - and F(0) - the membrane proton channel. F(1) has five subunits: alpha(3), beta(3), gamma(1), delta(1), epsilon(1). F(0) has three main subunits: a(1), b(2) and c(10-14). The alpha and beta chains form an alternating ring which encloses part of the gamma chain. F(1) is attached to F(0) by a central stalk formed by the gamma and epsilon chains, while a peripheral stalk is formed by the delta and b chains.

The protein resides in the cell membrane. Functionally, f(1)F(0) ATP synthase produces ATP from ADP in the presence of a proton or sodium gradient. F-type ATPases consist of two structural domains, F(1) containing the extramembraneous catalytic core and F(0) containing the membrane proton channel, linked together by a central stalk and a peripheral stalk. During catalysis, ATP synthesis in the catalytic domain of F(1) is coupled via a rotary mechanism of the central stalk subunits to proton translocation. In terms of biological role, key component of the F(0) channel; it plays a direct role in translocation across the membrane. A homomeric c-ring of between 10-14 subunits forms the central stalk rotor element with the F(1) delta and epsilon subunits. This chain is ATP synthase subunit c, found in Clostridium botulinum (strain Hall / ATCC 3502 / NCTC 13319 / Type A).